Reading from the N-terminus, the 600-residue chain is UvrABC system protein C (600 aa).

Residues 15–92 (EKAGCYLMKD…IKKYQPYYNV (78 aa)) enclose the GIY-YIG domain. Residues 197–232 (QEVKKDLTNKMLQASADLEFERAGELRDQLKYIEET) form the UVR domain.

The protein belongs to the UvrC family. As to quaternary structure, interacts with UvrB in an incision complex.

It is found in the cytoplasm. The UvrABC repair system catalyzes the recognition and processing of DNA lesions. UvrC both incises the 5' and 3' sides of the lesion. The N-terminal half is responsible for the 3' incision and the C-terminal half is responsible for the 5' incision. The protein is UvrABC system protein C of Lactobacillus delbrueckii subsp. bulgaricus (strain ATCC BAA-365 / Lb-18).